Here is a 275-residue protein sequence, read N- to C-terminus: Shikimate dehydrogenase (NADP(+)) (275 aa).

Shikimate-binding positions include 16 to 18 (SKS) and T63. The active-site Proton acceptor is K67. N88 and D104 together coordinate shikimate. NADP(+)-binding positions include 129–133 (GAGGA), 153–158 (NRTVAR), and M219. Y221 contributes to the shikimate binding site. G243 lines the NADP(+) pocket.

Belongs to the shikimate dehydrogenase family. As to quaternary structure, homodimer.

It catalyses the reaction shikimate + NADP(+) = 3-dehydroshikimate + NADPH + H(+). The protein operates within metabolic intermediate biosynthesis; chorismate biosynthesis; chorismate from D-erythrose 4-phosphate and phosphoenolpyruvate: step 4/7. Involved in the biosynthesis of the chorismate, which leads to the biosynthesis of aromatic amino acids. Catalyzes the reversible NADPH linked reduction of 3-dehydroshikimate (DHSA) to yield shikimate (SA). This Marinobacter nauticus (strain ATCC 700491 / DSM 11845 / VT8) (Marinobacter aquaeolei) protein is Shikimate dehydrogenase (NADP(+)).